Reading from the N-terminus, the 343-residue chain is uncharacterized protein (343 aa).

The disordered stretch occupies residues 66–89; sequence TQNPEPTSASTPPSASASSLPNGA. The span at 71 to 84 shows a compositional bias: low complexity; it reads PTSASTPPSASASS. The chain crosses the membrane as a helical span at residues 96–116; that stretch reads GVIAGPIVGVLGGLIVLVIIF. Disordered stretches follow at residues 161 to 191 and 252 to 343; these read GGYQMHSTPWASSPRNSTIPQRSQSFYNDTR and GRPL…SEHF. Over residues 165–188 the composition is skewed to polar residues; sequence MHSTPWASSPRNSTIPQRSQSFYN. Positions 280-289 are enriched in basic and acidic residues; the sequence is SNDDSDETKL. Residues 290–299 show a composition bias toward low complexity; the sequence is KQSSTESSSE. 2 stretches are compositionally biased toward basic and acidic residues: residues 301 to 311 and 322 to 333; these read LDEKDKFDKNS and SSYEHEISEEHK. Positions 334–343 are enriched in basic residues; that stretch reads KHSKKRSEHF.

The protein resides in the golgi apparatus membrane. This is an uncharacterized protein from Schizosaccharomyces pombe (strain 972 / ATCC 24843) (Fission yeast).